We begin with the raw amino-acid sequence, 168 residues long: UPF0262 protein BBta_0898 (168 aa).

It belongs to the UPF0262 family.

The protein is UPF0262 protein BBta_0898 of Bradyrhizobium sp. (strain BTAi1 / ATCC BAA-1182).